The following is a 60-amino-acid chain: Ixodegrin-like peptide (60 aa).

The first 21 residues, 1 to 21, serve as a signal peptide directing secretion; sequence MNAAFIAALLILGALTLDAMA. The Cell attachment site signature appears at 49 to 51; sequence RGD.

Belongs to the ixodegrin family. In terms of processing, contains 3 disulfide bonds. In terms of tissue distribution, expressed in salivary glands.

It is found in the secreted. Tick salivary platelet aggregation inhibitor that plays an important part in the anti-hemostatic strategy of ticks. Inhibits platelet aggregation induced by ADP, thrombin and thromboxane A2 (TXA2). Blocks platelet adhesion to soluble collagen (most probably through the binding to alpha-2/beta-1 integrin (ITGA2/ITGB1)) and binds to purified glycoprotein IIb/IIIa (ITGA2B/ITGB3) in a dose-dependent manner. In vivo, reduces thrombus weight effectively in a rat arteriovenous shunt model and inhibits thrombosis in a carrageenan-induced mouse tail thrombosis model. The polypeptide is Ixodegrin-like peptide (Ixodes scapularis (Black-legged tick)).